We begin with the raw amino-acid sequence, 565 residues long: Sensor histidine kinase YpdA (565 aa).

Residues 1–3 (MHE) are Cytoplasmic-facing. A helical membrane pass occupies residues 4-24 (IFNMLLAVFDRAALMLICLFF). The Periplasmic segment spans residues 25–45 (LIRIRLFRELLHKSAHSPKEL). The chain crosses the membrane as a helical span at residues 46 to 66 (LAVTAIFSLFALFSTWSGVPV). Over 67-74 (EGSLVNVR) the chain is Cytoplasmic. The helical transmembrane segment at 75–95 (IIAVMSGGILFGPWVGIITGV) threads the bilayer. At 96–107 (IAGIHRYLIDIG) the chain is on the periplasmic side. A helical membrane pass occupies residues 108-128 (GVTAIPCFITSILAGCISGWI). The Cytoplasmic segment spans residues 129-139 (NLKIPKAQRWR). The helical transmembrane segment at 140-160 (VGILGGMLCETLTMILVIVWA) threads the bilayer. Over 161–172 (PTTALGIDIVSK) the chain is Periplasmic. The helical transmembrane segment at 173–193 (IGIPMILGSVCIGFIVLLVQS) threads the bilayer. Residues 194–565 (VEGEKEASAA…PVASQATLLL (372 aa)) are Cytoplasmic-facing. The 120-residue stretch at 223-342 (VNSESLRKVC…AVGLSQIIST (120 aa)) folds into the GAF domain. Residues 343–554 (QLEVSRAEQL…EIAFYIPNQR (212 aa)) enclose the Histidine kinase domain. Phosphohistidine; by autocatalysis is present on H371.

Interacts with BtsT and YhjX. In terms of processing, autophosphorylated.

It localises to the cell inner membrane. It catalyses the reaction ATP + protein L-histidine = ADP + protein N-phospho-L-histidine.. Functionally, member of the two-component regulatory system YpdA/YpdB, which is part of a nutrient-sensing regulatory network composed of YpdA/YpdB, the high-affinity pyruvate signaling system BtsS/BtsR and their respective target proteins, YhjX and BtsT. YpdA activates YpdB by phosphorylation in response to high concentrations of extracellular pyruvate. Activation of the YpdA/YpdB signaling cascade also promotes BtsS/BtsR-mediated btsT expression. The protein is Sensor histidine kinase YpdA (ypdA) of Escherichia coli (strain K12).